The chain runs to 155 residues: MSRRGTAEEKTAKSDPIYRNRLVNMLVNRILKHGKKSLAYQIIYRAVKKIQQKTETNPLSVLRQAIRGVTPNIAVKARRVGGSTHQVPIEIGSTQGKALAIRWLLGASRKRPGRNMAFKLSSELVDAARGSGDAIRKKEETHRMAEANRAFAHFR.

The protein belongs to the universal ribosomal protein uS7 family. As to quaternary structure, part of the 30S ribosomal subunit.

Its subcellular location is the plastid. The protein resides in the chloroplast. One of the primary rRNA binding proteins, it binds directly to 16S rRNA where it nucleates assembly of the head domain of the 30S subunit. This Nymphaea alba (White water-lily) protein is Small ribosomal subunit protein uS7cz/uS7cy (rps7-A).